The following is a 238-amino-acid chain: TATA-box-binding protein (238 aa).

The segment at 1–58 is disordered; sequence MDLKLPPTNPTNPQQAKTFMKSIEEDEKNKAEDLDIIKKEDIDEPKQEDTTDGNGGGG. Residues 27 to 49 show a composition bias toward basic and acidic residues; the sequence is EKNKAEDLDIIKKEDIDEPKQED. Repeat copies occupy residues 65–141 and 155–232.

This sequence belongs to the TBP family. In terms of assembly, belongs to the TFIID complex together with the TBP-associated factors (TAFs). Binds DNA as monomer.

Its subcellular location is the nucleus. Functionally, general transcription factor that functions at the core of the DNA-binding multiprotein factor TFIID. Binding of TFIID to the TATA box is the initial transcriptional step of the pre-initiation complex (PIC), playing a role in the activation of eukaryotic genes transcribed by RNA polymerase II. This chain is TATA-box-binding protein (TBP1), found in Candida albicans (strain SC5314 / ATCC MYA-2876) (Yeast).